We begin with the raw amino-acid sequence, 161 residues long: Large ribosomal subunit protein uL15 (161 aa).

A disordered region spans residues 1 to 47 (MKLHELHDNPGANRKKKRVARGPGSGKGKTAGRGIKGQTSRSGVALN). Residues 23–35 (PGSGKGKTAGRGI) are compositionally biased toward gly residues.

Belongs to the universal ribosomal protein uL15 family. In terms of assembly, part of the 50S ribosomal subunit.

Binds to the 23S rRNA. The protein is Large ribosomal subunit protein uL15 of Paracoccus denitrificans (strain Pd 1222).